A 175-amino-acid polypeptide reads, in one-letter code: tRNA (cytidine(56)-2'-O)-methyltransferase (175 aa).

Leucine 83 serves as a coordination point for S-adenosyl-L-methionine.

Belongs to the aTrm56 family. Homodimer.

The protein localises to the cytoplasm. The enzyme catalyses cytidine(56) in tRNA + S-adenosyl-L-methionine = 2'-O-methylcytidine(56) in tRNA + S-adenosyl-L-homocysteine + H(+). Specifically catalyzes the AdoMet-dependent 2'-O-ribose methylation of cytidine at position 56 in tRNAs. The polypeptide is tRNA (cytidine(56)-2'-O)-methyltransferase (Methanosphaera stadtmanae (strain ATCC 43021 / DSM 3091 / JCM 11832 / MCB-3)).